The following is a 70-amino-acid chain: Large ribosomal subunit protein bL31 (70 aa).

Positions 16, 18, 37, and 40 each coordinate Zn(2+).

Belongs to the bacterial ribosomal protein bL31 family. Type A subfamily. Part of the 50S ribosomal subunit. Zn(2+) serves as cofactor.

Functionally, binds the 23S rRNA. In Glaesserella parasuis serovar 5 (strain SH0165) (Haemophilus parasuis), this protein is Large ribosomal subunit protein bL31.